A 478-amino-acid chain; its full sequence is Putrescine oxidase (478 aa).

Residue 15–70 (RDVVVVGAGPAGLMAARTLVAAGRTVAVLEARDRVGGRTWSKTVDGAFLEIGGQWI) coordinates FAD.

This sequence belongs to the flavin monoamine oxidase family. FAD is required as a cofactor.

The enzyme catalyses putrescine + O2 + H2O = 4-aminobutanal + H2O2 + NH4(+). The sequence is that of Putrescine oxidase (puo) from Kocuria rosea (Deinococcus erythromyxa).